A 270-amino-acid polypeptide reads, in one-letter code: uncharacterized protein (270 aa).

2 stretches are compositionally biased toward basic and acidic residues: residues 1–13 (MSEF…KDLY) and 49–73 (EVER…KEEK). 3 disordered regions span residues 1–76 (MSEF…KQEE), 90–111 (STSP…PQTE), and 204–270 (KKRR…FRTE). Positions 90–102 (STSPAQEEQGSST) are enriched in polar residues. Over residues 204-216 (KKRRPGQKQRAAK) the composition is skewed to basic residues. Positions 218 to 235 (LALERTKERDTKAREIKK) are enriched in basic and acidic residues. Basic residues predominate over residues 236 to 253 (QLKKKFHKRGGKKNKKKV).

This is an uncharacterized protein from Saccharomyces cerevisiae (strain ATCC 204508 / S288c) (Baker's yeast).